An 824-amino-acid polypeptide reads, in one-letter code: Mucosa-associated lymphoid tissue lymphoma translocation protein 1 (824 aa).

A disordered region spans residues 1–27 (MSLLGDPLQALPPSAAPTGPLLAPPAG). Ser2 bears the N-acetylserine mark. Residues 11-27 (LPPSAAPTGPLLAPPAG) show a composition bias toward low complexity. One can recognise a Death domain in the interval 39 to 126 (RRLSELLDQA…EVLQLLSPPG (88 aa)). 2 consecutive Ig-like C2-type domains span residues 125-201 (PGIK…FEFS) and 212-305 (PESF…KKVE). Residue Ser135 is modified to Phosphoserine. Intrachain disulfides connect Cys147–Cys190 and Cys248–Cys290. Residues 348 to 562 (IGNMNYREHP…SLSEKRALTD (215 aa)) are caspase-like. Residues 369–376 (LTNLLRQL) carry the Nuclear export signal motif. Residues His415 and Cys464 contribute to the active site.

This sequence belongs to the peptidase C14B family. As to quaternary structure, homooligomer; forms oligomers which bind to TRAF6. Forms a complex with CARD14 and MALT1; resulting in the formation of a CBM (CARD14-BCL10-MALT1) complex. Forms a complex with CARD11 and MALT1; resulting in the formation of a CBM (CARD11-BCL10-MALT1) complex. Forms a complex with CARD9 and MALT1; resulting in the formation of a CBM (CARD9-BCL10-MALT1) complex. Highly expressed in peripheral blood mononuclear cells. Detected at lower levels in bone marrow, thymus and lymph node, and at very low levels in colon and lung.

It localises to the cytoplasm. The protein resides in the perinuclear region. It is found in the nucleus. Its function is as follows. Protease that enhances BCL10-induced activation: acts via formation of CBM complexes that channel adaptive and innate immune signaling downstream of CARD domain-containing proteins (CARD9, CARD11 and CARD14) to activate NF-kappa-B and MAP kinase p38 pathways which stimulate expression of genes encoding pro-inflammatory cytokines and chemokines. Mediates BCL10 cleavage: MALT1-dependent BCL10 cleavage plays an important role in T-cell antigen receptor-induced integrin adhesion. Involved in the induction of T helper 17 cells (Th17) differentiation. Cleaves RC3H1 and ZC3H12A in response to T-cell receptor (TCR) stimulation which releases their cooperatively repressed targets to promote Th17 cell differentiation. Also mediates cleavage of N4BP1 in T-cells following TCR-mediated activation, leading to N4BP1 inactivation. May also have ubiquitin ligase activity: binds to TRAF6, inducing TRAF6 oligomerization and activation of its ligase activity. This is Mucosa-associated lymphoid tissue lymphoma translocation protein 1 from Homo sapiens (Human).